Consider the following 365-residue polypeptide: Carbamoyl phosphate synthase small chain (365 aa).

2 CPSase regions span residues 1-166 (MKRQ…PSPG) and 1-169 (MKRQ…GRGH). Residues serine 45, glycine 218, and glycine 220 each coordinate L-glutamine. In terms of domain architecture, Glutamine amidotransferase type-1 spans 170-357 (RVVLVDFGMK…LTMIENFKKE (188 aa)). Cysteine 245 acts as the Nucleophile in catalysis. Positions 246, 249, 287, 289, and 290 each coordinate L-glutamine. Residues histidine 330 and glutamate 332 contribute to the active site.

Belongs to the CarA family. As to quaternary structure, composed of two chains; the small (or glutamine) chain promotes the hydrolysis of glutamine to ammonia, which is used by the large (or ammonia) chain to synthesize carbamoyl phosphate. Tetramer of heterodimers (alpha,beta)4.

The catalysed reaction is hydrogencarbonate + L-glutamine + 2 ATP + H2O = carbamoyl phosphate + L-glutamate + 2 ADP + phosphate + 2 H(+). It carries out the reaction L-glutamine + H2O = L-glutamate + NH4(+). It participates in amino-acid biosynthesis; L-arginine biosynthesis; carbamoyl phosphate from bicarbonate: step 1/1. Its pathway is pyrimidine metabolism; UMP biosynthesis via de novo pathway; (S)-dihydroorotate from bicarbonate: step 1/3. In terms of biological role, small subunit of the glutamine-dependent carbamoyl phosphate synthetase (CPSase). CPSase catalyzes the formation of carbamoyl phosphate from the ammonia moiety of glutamine, carbonate, and phosphate donated by ATP, constituting the first step of 2 biosynthetic pathways, one leading to arginine and/or urea and the other to pyrimidine nucleotides. The small subunit (glutamine amidotransferase) binds and cleaves glutamine to supply the large subunit with the substrate ammonia. The chain is Carbamoyl phosphate synthase small chain from Bacillus cereus (strain ATCC 14579 / DSM 31 / CCUG 7414 / JCM 2152 / NBRC 15305 / NCIMB 9373 / NCTC 2599 / NRRL B-3711).